Reading from the N-terminus, the 257-residue chain is MDTTQSNGQTDTQGQLHAQTAEGGNDFGRRNPLEIGVQLRNLVNRGDFLTVQYAGGQLVTRLLEVDVRGRTFTFDWGALSDQNRGLLGAPRCQFHAQPDGVRVEFATATPRETRFEGLPAFEADFPEVLFYVQRREYFRVDAPILDPYVCSGRLPEGDTFRFEVHDLSLGGVGMRTADERVAELPMGTRLLDCELVLGALGRLSLDLQLVSHRSTALPNGTQRYQLGFRFLTLPGSAENTLQRLITQLEMKRRSLVR.

Residues 1–18 (MDTTQSNGQTDTQGQLHA) are compositionally biased toward polar residues. The disordered stretch occupies residues 1 to 30 (MDTTQSNGQTDTQGQLHAQTAEGGNDFGRR). Residues 133–246 (QRREYFRVDA…AENTLQRLIT (114 aa)) enclose the PilZ domain.

The protein belongs to the YcgR family. As to quaternary structure, monomer. Interacts with the flagellar basal bodies.

The protein resides in the bacterial flagellum basal body. Acts as a flagellar brake, regulating swimming and swarming in a bis-(3'-5') cyclic diguanylic acid (c-di-GMP)-dependent manner. Binds 1 c-di-GMP dimer per subunit. Increasing levels of c-di-GMP lead to decreased motility. This Paraburkholderia phytofirmans (strain DSM 17436 / LMG 22146 / PsJN) (Burkholderia phytofirmans) protein is Flagellar brake protein YcgR 1.